A 116-amino-acid chain; its full sequence is Chorion protein S15 (116 aa).

The first 18 residues, 1 to 18, serve as a signal peptide directing secretion; the sequence is MKFLIAFAVLALVACINA.

The protein belongs to the chorion protein S15/S18 family.

It localises to the secreted. Its function is as follows. Chorion membrane (egg shell) protein; plays a role in protecting the egg from the environment. The protein is Chorion protein S15 (Cp15) of Drosophila virilis (Fruit fly).